The chain runs to 791 residues: Sphingomyelin phosphodiesterase 4 (791 aa).

The helical transmembrane segment at 755-775 (LFALLSFGLFSSTGLILIISF) threads the bilayer.

Mg(2+) is required as a cofactor.

It localises to the endoplasmic reticulum membrane. The protein localises to the golgi apparatus membrane. Its subcellular location is the nucleus envelope. It is found in the cell membrane. The protein resides in the sarcolemma. The catalysed reaction is a sphingomyelin + H2O = phosphocholine + an N-acylsphing-4-enine + H(+). Its function is as follows. Catalyzes the hydrolysis of membrane sphingomyelin to form phosphorylcholine and ceramide. It has a relevant role in the homeostasis of membrane sphingolipids, thereby influencing membrane integrity, and endoplasmic reticulum organization and function. May sensitize cells to DNA damage-induced apoptosis. This is Sphingomyelin phosphodiesterase 4 (smpd4) from Danio rerio (Zebrafish).